A 265-amino-acid chain; its full sequence is ClpXP adapter protein SpxH (265 aa).

It belongs to the SpxH family. As to quaternary structure, interacts with Spx.

Its subcellular location is the cytoplasm. Its function is as follows. Adapter protein required for efficient degradation of Spx by ClpXP under non-stress conditions. Interaction with Spx stabilizes Spx and exposes the C-terminus of Spx for recognition and proteolysis by ClpXP. This is ClpXP adapter protein SpxH from Staphylococcus haemolyticus (strain JCSC1435).